A 183-amino-acid chain; its full sequence is NADH-quinone oxidoreductase subunit B 2 (183 aa).

Cys-47, Cys-48, Cys-113, and Cys-142 together coordinate [4Fe-4S] cluster.

The protein belongs to the complex I 20 kDa subunit family. As to quaternary structure, NDH-1 is composed of 14 different subunits. Subunits NuoB, C, D, E, F, and G constitute the peripheral sector of the complex. It depends on [4Fe-4S] cluster as a cofactor.

Its subcellular location is the cell inner membrane. It carries out the reaction a quinone + NADH + 5 H(+)(in) = a quinol + NAD(+) + 4 H(+)(out). Its function is as follows. NDH-1 shuttles electrons from NADH, via FMN and iron-sulfur (Fe-S) centers, to quinones in the respiratory chain. The immediate electron acceptor for the enzyme in this species is believed to be ubiquinone. Couples the redox reaction to proton translocation (for every two electrons transferred, four hydrogen ions are translocated across the cytoplasmic membrane), and thus conserves the redox energy in a proton gradient. The protein is NADH-quinone oxidoreductase subunit B 2 of Anaeromyxobacter sp. (strain Fw109-5).